A 236-amino-acid polypeptide reads, in one-letter code: 6-carboxyhexanoate--CoA ligase (236 aa).

Belongs to the BioW family. As to quaternary structure, homodimer. Mg(2+) is required as a cofactor.

The catalysed reaction is heptanedioate + ATP + CoA = 6-carboxyhexanoyl-CoA + AMP + diphosphate. Its pathway is metabolic intermediate metabolism; pimeloyl-CoA biosynthesis; pimeloyl-CoA from pimelate: step 1/1. Catalyzes the transformation of pimelate into pimeloyl-CoA with concomitant hydrolysis of ATP to AMP. This chain is 6-carboxyhexanoate--CoA ligase, found in Methanococcus aeolicus (strain ATCC BAA-1280 / DSM 17508 / OCM 812 / Nankai-3).